The following is a 142-amino-acid chain: HTH-type transcriptional regulator MntR (142 aa).

Positions 1-63 (MTTPSMEDYI…YEKYRGLVLT (63 aa)) constitute an HTH dtxR-type domain. Residues Asp-8, Glu-11, His-77, Glu-99, Glu-102, and His-103 each coordinate Cd(2+). The Mn(2+) site is built by Asp-8, Glu-11, His-77, Glu-99, Glu-102, and His-103.

Belongs to the DtxR/MntR family. Homodimer.

The protein localises to the cytoplasm. Its activity is regulated as follows. DNA binding is strongly activated by Mn(2+) and Cd(2+), but it is poorly activated by non-cognate metal cations, including Co(2+), Fe(2+), Ni(2+), Ca(2+) and Zn(2+). In the strict absence of divalent transition metal ions, MntR has a low affinity for DNA. Functionally, central regulator of manganese homeostasis that regulates the expression of both manganese uptake and efflux systems. In the presence of high levels of manganese, it mediates repression of the manganese uptake systems MntH and MntABCD and activation of the efflux systems MneP and MneS. Binds with high affinity to the regulatory regions of its target genes. The manganese concentration required for activation of efflux is higher than that for repression of uptake. The protein is HTH-type transcriptional regulator MntR of Bacillus subtilis (strain 168).